The sequence spans 366 residues: Protein RecA (366 aa).

77–84 (GPESSGKT) is a binding site for ATP. The segment at 346-366 (IGGPGGEDDDAGGAAGVGDEA) is disordered.

It belongs to the RecA family.

It localises to the cytoplasm. In terms of biological role, can catalyze the hydrolysis of ATP in the presence of single-stranded DNA, the ATP-dependent uptake of single-stranded DNA by duplex DNA, and the ATP-dependent hybridization of homologous single-stranded DNAs. It interacts with LexA causing its activation and leading to its autocatalytic cleavage. In Rhodospirillum rubrum (strain ATCC 11170 / ATH 1.1.1 / DSM 467 / LMG 4362 / NCIMB 8255 / S1), this protein is Protein RecA.